We begin with the raw amino-acid sequence, 335 residues long: Galactosylgalactosylxylosylprotein 3-beta-glucuronosyltransferase 3 (335 aa).

The Cytoplasmic portion of the chain corresponds to 1–7; sequence MKLKLKN. A helical; Signal-anchor for type II membrane protein membrane pass occupies residues 8–28; it reads VFLAYFLVSIAGLLYALVQLG. Over 29 to 335 the chain is Lumenal; the sequence is QPCDCLPPLR…GQGSDPAIEV (307 aa). Position 196 (Asp196) interacts with Mn(2+). Glu281 acts as the Proton acceptor in catalysis. A glycan (N-linked (GlcNAc...) asparagine) is linked at Asn300. Over residues 312–322 the composition is skewed to basic and acidic residues; sequence EKPKMKQEEQL. Residues 312–335 are disordered; that stretch reads EKPKMKQEEQLQRQGQGSDPAIEV.

This sequence belongs to the glycosyltransferase 43 family. As to quaternary structure, homodimer; disulfide-linked. Interacts with PXYLP1; the interaction increases the 2-phosphoxylose phosphatase activity of PXYLP1 during completion of linkage region formation in a B3GAT3-mediated manner. Mn(2+) is required as a cofactor. N-glycosylated. As to expression, liver, brain and heart. Moderate expression seen in lung, skeletal muscle, kidney and testis.

The protein resides in the golgi apparatus membrane. Its subcellular location is the golgi apparatus. The protein localises to the cis-Golgi network. The enzyme catalyses 3-O-(beta-D-galactosyl-(1-&gt;3)-beta-D-galactosyl-(1-&gt;4)-beta-D-xylosyl)-L-seryl-[protein] + UDP-alpha-D-glucuronate = 3-O-(beta-D-GlcA-(1-&gt;3)-beta-D-Gal-(1-&gt;3)-beta-D-Gal-(1-&gt;4)-beta-D-Xyl)-L-seryl-[protein] + UDP + H(+). It functions in the pathway protein modification; protein glycosylation. Functionally, glycosaminoglycans biosynthesis. Involved in forming the linkage tetrasaccharide present in heparan sulfate and chondroitin sulfate. Transfers a glucuronic acid moiety from the uridine diphosphate-glucuronic acid (UDP-GlcUA) to the common linkage region trisaccharide Gal-beta-1,3-Gal-beta-1,4-Xyl covalently bound to a Ser residue at the glycosaminylglycan attachment site of proteoglycans. Can also play a role in the biosynthesis of l2/HNK-1 carbohydrate epitope on glycoproteins. Highest activity seen with Gal-beta-1,3-Gal-beta-O-R (where R=naphthalenemethanol or benzyl alcohol). Stimulates 2-phosphoxylose phosphatase activity of PXYLP1 in presence of uridine diphosphate-glucuronic acid (UDP-GlcUA) during completion of linkage region formation. This is Galactosylgalactosylxylosylprotein 3-beta-glucuronosyltransferase 3 (B3GAT3) from Cricetulus griseus (Chinese hamster).